A 472-amino-acid chain; its full sequence is PEP-dependent dihydroxyacetone kinase, phosphoryl donor subunit DhaM (472 aa).

The PTS EIIA type-4 domain occupies 1–135 (MVNLVIVSHS…NALEAKRVQL (135 aa)). The Tele-phosphohistidine intermediate role is filled by H9. The HPr domain occupies 156-243 (ARSVSVVIQN…ALAAENFGEP (88 aa)). The active-site Pros-phosphohistidine intermediate is the H170. Positions 266 to 472 (PQPQDRISRE…DIPGKRVIRG (207 aa)) are PTS EI-like, N-terminal part. H432 serves as the catalytic Tele-phosphohistidine intermediate.

It belongs to the PEP-utilizing enzyme family. Homodimer. The dihydroxyacetone kinase complex is composed of a homodimer of DhaM, a homodimer of DhaK and the subunit DhaL.

It carries out the reaction dihydroxyacetone + phosphoenolpyruvate = dihydroxyacetone phosphate + pyruvate. Component of the dihydroxyacetone kinase complex, which is responsible for the phosphoenolpyruvate (PEP)-dependent phosphorylation of dihydroxyacetone. DhaM serves as the phosphoryl donor. Is phosphorylated by phosphoenolpyruvate in an EI- and HPr-dependent reaction, and a phosphorelay system on histidine residues finally leads to phosphoryl transfer to DhaL and dihydroxyacetone. This Klebsiella michiganensis (strain ATCC 8724 / DSM 4798 / JCM 20051 / NBRC 3318 / NRRL B-199 / KCTC 1686 / BUCSAV 143 / CCM 1901) protein is PEP-dependent dihydroxyacetone kinase, phosphoryl donor subunit DhaM.